The following is a 271-amino-acid chain: MNGHCLFAASPPRLFPLRSISSSVSPSGSYRIKFSDNVAVECRNLCFSVSTRQGISVPILRDCSFRIPSGQLWMILGPNGCGKSTLLKILAGVVNPSSGTVFVEKPKNFVFQNPDHQVVMPTVEADVAFGLGKYHDMNQEEVKSRVIKALEAVGMRDYMQRPIQTLSGGQKQRIAIAGALAEACKVLLLDELTTFLDESDQMGVIKAVKDLINAKKGDVTALWVTHRLEELKYADGAVYMENGRVVRHGDAATISDFIKAKQSSYIDQIGS.

An ABC transporter domain is found at 40-267; that stretch reads VECRNLCFSV…IKAKQSSYID (228 aa). 77-84 lines the ATP pocket; the sequence is GPNGCGKS.

Belongs to the ABC transporter superfamily. ABCI family.

The protein is ABC transporter I family member 10 (ABCI10) of Arabidopsis thaliana (Mouse-ear cress).